The sequence spans 344 residues: L-threonine 3-dehydrogenase (344 aa).

Residue Cys-42 participates in Zn(2+) binding. Active-site charge relay system residues include Thr-44 and His-47. His-67, Glu-68, Cys-97, Cys-100, Cys-103, and Cys-111 together coordinate Zn(2+). Residues Ile-179, Asp-199, Arg-204, 266-268, and 290-291 contribute to the NAD(+) site; these read LGI and IY.

It belongs to the zinc-containing alcohol dehydrogenase family. Homotetramer. Requires Zn(2+) as cofactor.

It localises to the cytoplasm. The enzyme catalyses L-threonine + NAD(+) = (2S)-2-amino-3-oxobutanoate + NADH + H(+). The protein operates within amino-acid degradation; L-threonine degradation via oxydo-reductase pathway; glycine from L-threonine: step 1/2. Functionally, catalyzes the NAD(+)-dependent oxidation of L-threonine to 2-amino-3-ketobutyrate. This chain is L-threonine 3-dehydrogenase, found in Chelativorans sp. (strain BNC1).